Reading from the N-terminus, the 294-residue chain is Sarcotoxin II-2 (294 aa).

Residues 1-22 form the signal peptide; it reads MKSFVFFAACFAIVALNSLAHA. Positions 23 to 24 are cleaved as a propeptide — removed by a dipeptidylpeptidase; that stretch reads YP. Gln25 bears the Pyrrolidone carboxylic acid mark. Arg293 carries the post-translational modification Arginine amide.

Belongs to the attacin/sarcotoxin-2 family. In terms of tissue distribution, synthesized by the fat body and is eventually secreted into the hemolymph.

The protein localises to the secreted. Its function is as follows. Sarcotoxin II is an antibacterial protein which plays a role in the inflammatory response of this insect. The main effect of sarcotoxin II on E.coli may be the inhibition of cell wall synthesis, including septum formation. The sequence is that of Sarcotoxin II-2 from Sarcophaga peregrina (Flesh fly).